The sequence spans 780 residues: MAAVDLEKLRASGAGKAIGVLTSGGDAQGMNAAVRAVTRMGIYVGAKVFLIYEGYEGLVEGGENIKQANWLSVSNIIQLGGTIIGSARCKAFTTREGRRAAAYNLVQHGITNLCVIGGDGSLTGANIFRSEWGSLLEELVAEGKISETTARTYSHLNIAGLVGSIDNDFCGTDMTIGTDSALHRIMEVIDAITTTAQSHQRTFVLEVMGRHCGYLALVSALASGADWLFIPEAPPEDGWENFMCERLGETRSRGSRLNIIIIAEGAIDRNGKPISSSYVKDLVVQRLGFDTRVTVLGHVQRGGTPSAFDRILSSKMGMEAVMALLEATPDTPACVVTLSGNQSVRLPLMECVQMTKEVQKAMDDKRFDEATQLRGGSFENNWNIYKLLAHQKPPKEKSNFSLAILNVGAPAAGMNAAVRSAVRTGISHGHTVYVVHDGFEGLAKGQVQEVGWHDVAGWLGRGGSMLGTKRTLPKGQLESIVENIRIYGIHALLVVGGFEAYEGVLQLVEARGRYEELCIVMCVIPATISNNVPGTDFSLGSDTAVNAAMESCDRIKQSASGTKRRVFIVETMGGYCGYLATVTGIAVGADAAYVFEDPFNIHDLKVNVEHMTEKMKTDIQRGLVLRNEKCHDYYTTEFLYNLYSSEGKGVFDCRTNVLGHLQQGGAPTPFDRNYGTKLGVKAMLWLSEKLREVYRKGRVFANAPDSACVIGLKKKAVAFSPVTELKKDTDFEHRMPREQWWLSLRLMLKMLAQYRISMAAYVSGELEHVTRRTLSMDKGF.

Alanine 2 is subject to N-acetylalanine. The segment at alanine 2–histidine 390 is N-terminal catalytic PFK domain 1. ATP contacts are provided by residues glycine 25, arginine 88–cysteine 89, and glycine 118–serine 121. Mg(2+) is bound at residue aspartate 119. Residues serine 164–aspartate 166, arginine 201, methionine 208–arginine 210, glutamate 264, arginine 292, and histidine 298–arginine 301 contribute to the substrate site. The active-site Proton acceptor is the aspartate 166. Phosphoserine is present on serine 377. The segment at glutamine 391–phenylalanine 400 is interdomain linker. Residues serine 401 to phenylalanine 780 are C-terminal regulatory PFK domain 2. Beta-D-fructose 2,6-bisphosphate-binding positions include arginine 470, threonine 527–asparagine 531, arginine 565, methionine 572–glycine 574, and glutamate 628. O-linked (GlcNAc) serine glycosylation occurs at serine 529. Tyrosine 640 carries the phosphotyrosine modification. Beta-D-fructose 2,6-bisphosphate-binding positions include arginine 654, histidine 660 to glutamine 663, and arginine 734. Serine 775 bears the Phosphoserine mark.

The protein belongs to the phosphofructokinase type A (PFKA) family. ATP-dependent PFK group I subfamily. Eukaryotic two domain clade 'E' sub-subfamily. In terms of assembly, homo- and heterotetramers. Phosphofructokinase (PFK) enzyme functions as a tetramer composed of different combinations of 3 types of subunits, called PFKM (where M stands for Muscle), PFKL (Liver) and PFKP (Platelet). The composition of the PFK tetramer differs according to the tissue type it is present in. In muscles, it is composed of 4 PFKM subunits (also called M4). In the liver, the predominant form is a tetramer of PFKL subunits (L4). In erythrocytes, both PFKM and PFKL subunits randomly tetramerize to form M4, L4 and other combinations (ML3, M2L2, M3L). The kinetic and regulatory properties of the tetrameric enzyme are dependent on the subunit composition, hence can vary across tissues. Mg(2+) serves as cofactor. GlcNAcylation at Ser-529 by OGT decreases enzyme activity, leading to redirect glucose flux through the oxidative pentose phosphate pathway. Glycosylation is stimulated by both hypoxia and glucose deprivation.

The protein localises to the cytoplasm. The catalysed reaction is beta-D-fructose 6-phosphate + ATP = beta-D-fructose 1,6-bisphosphate + ADP + H(+). It functions in the pathway carbohydrate degradation; glycolysis; D-glyceraldehyde 3-phosphate and glycerone phosphate from D-glucose: step 3/4. Its activity is regulated as follows. Allosterically activated by ADP, AMP, or fructose 2,6-bisphosphate, and allosterically inhibited by ATP or citrate. GlcNAcylation by OGT overcomes allosteric regulation. In terms of biological role, catalyzes the phosphorylation of D-fructose 6-phosphate to fructose 1,6-bisphosphate by ATP, the first committing step of glycolysis. Negatively regulates the phagocyte oxidative burst in response to bacterial infection by controlling cellular NADPH biosynthesis and NADPH oxidase-derived reactive oxygen species. Upon macrophage activation, drives the metabolic switch toward glycolysis, thus preventing glucose turnover that produces NADPH via pentose phosphate pathway. This is ATP-dependent 6-phosphofructokinase, liver type from Homo sapiens (Human).